Consider the following 176-residue polypeptide: Ferritin, middle subunit (176 aa).

Residues 7-156 (QNYHHDCERA…DHITNLTKMD (150 aa)) enclose the Ferritin-like diiron domain. Residues E24, E59, H62, E104, and Q138 each coordinate Fe cation.

Belongs to the ferritin family. In terms of assembly, oligomer of 24 subunits. There are at least two types of subunits. The functional molecule forms a roughly spherical shell with a diameter of 12 nm and contains a central cavity into which the insoluble mineral iron core is deposited. Almost exclusively in the gonads.

The enzyme catalyses 4 Fe(2+) + O2 + 4 H(+) = 4 Fe(3+) + 2 H2O. Its function is as follows. Stores iron in a soluble, non-toxic, readily available form. Important for iron homeostasis. Has ferroxidase activity. Iron is taken up in the ferrous form and deposited as ferric hydroxides after oxidation. This is Ferritin, middle subunit from Salmo salar (Atlantic salmon).